Reading from the N-terminus, the 520-residue chain is ATP-dependent clpX-like chaperone, mitochondrial (520 aa).

A mitochondrion-targeting transit peptide spans M1–Y13. Residue G140 to T147 participates in ATP binding.

Belongs to the ClpX chaperone family. As to quaternary structure, homohexamer that forms a ring structure; this hexamerization requires ATP binding. Interacts with HEM1.

It is found in the mitochondrion inner membrane. ATP-dependent unfoldase that stimulates the incorporation of the pyridoxal phosphate cofactor into 5-aminolevulinate synthase (HEM1), thereby activating 5-aminolevulinate (ALA) synthesis, the first step in heme biosynthesis. Up-regulates heme biosynthesis. In Saccharomyces cerevisiae (strain ATCC 204508 / S288c) (Baker's yeast), this protein is ATP-dependent clpX-like chaperone, mitochondrial.